We begin with the raw amino-acid sequence, 88 residues long: Small ribosomal subunit protein uS15c (88 aa).

Belongs to the universal ribosomal protein uS15 family. As to quaternary structure, part of the 30S ribosomal subunit.

It localises to the plastid. Its subcellular location is the chloroplast. The chain is Small ribosomal subunit protein uS15c (rps15) from Crucihimalaya wallichii (Rock-cress).